We begin with the raw amino-acid sequence, 139 residues long: Protein archease (139 aa).

Ca(2+) contacts are provided by Asp-12, Asp-138, and Ile-139.

This sequence belongs to the archease family.

Activates the tRNA-splicing ligase complex by facilitating the enzymatic turnover of catalytic subunit RtcB. Acts by promoting the guanylylation of RtcB, a key intermediate step in tRNA ligation. Can also alter the NTP specificity of RtcB such that ATP, dGTP or ITP is used efficiently. The chain is Protein archease from Saccharolobus islandicus (strain M.16.27) (Sulfolobus islandicus).